The primary structure comprises 174 residues: Co-chaperone protein HscB homolog (174 aa).

The J domain occupies 2-74 (NYFELFKFSP…IRRAEHMLSL (73 aa)).

Belongs to the HscB family. Interacts with HscA and stimulates its ATPase activity.

Functionally, co-chaperone involved in the maturation of iron-sulfur cluster-containing proteins. Seems to help targeting proteins to be folded toward HscA. In Shewanella baltica (strain OS155 / ATCC BAA-1091), this protein is Co-chaperone protein HscB homolog.